The primary structure comprises 67 residues: Alpha-conotoxin G1.5 (67 aa).

Positions 1-21 are cleaved as a signal peptide; sequence MGMRMMFTVFLLVALATTVVS. Positions 22–47 are excised as a propeptide; sequence FTSDRASDRRNAAVKAFDLISSTVKK. 2 disulfide bridges follow: Cys49-Cys55 and Cys50-Cys63. Gln65 bears the Glutamine amide mark.

Belongs to the conotoxin A superfamily. In terms of tissue distribution, expressed by the venom duct.

It is found in the secreted. Its function is as follows. Alpha-conotoxins act on postsynaptic membranes, they bind to the nicotinic acetylcholine receptors (nAChR) and thus inhibit them. Globular isomer (C1-C3; C2-C4) selectively inhibits neuronal (non-muscle) nAChR subtypes particularly human alpha-3-beta-2/CHRNA3-CHRNB2 (IC(50)=35.7 nM) and alpha-9-alpha-10/CHRNA9-CHRNA10 nAChRs (IC(50)=569 nM), while the ribbon isomer (C1-C4; C2-C3) shows weak inhibition on alpha-3-beta-2/CHRNA3-CHRNB2, but not on all other receptors tested. This chain is Alpha-conotoxin G1.5, found in Conus geographus (Geography cone).